Here is a 433-residue protein sequence, read N- to C-terminus: Evolutionarily conserved signaling intermediate in Toll pathway, mitochondrial (433 aa).

The transit peptide at 1–48 (MSWAQAILLARGASRGWGGICSTALTGAPFSQVPPQAPRGLRCSAAAH) directs the protein to the mitochondrion. Residues 36-63 (QAPRGLRCSAAAHNPDSSLVPHPPEPPR) form a disordered region. Lysine 372 is covalently cross-linked (Glycyl lysine isopeptide (Lys-Gly) (interchain with G-Cter in ubiquitin)). The tract at residues 397 to 433 (SGELLPSSSELEEPPPPPPEGQEEEEDSQQRQQQGQS) is disordered.

Belongs to the ECSIT family. As to quaternary structure, interacts with MAP3K1, SMAD4 and TRAF6. Interacts with SMAD1 only after BMP4-treatment. Part of the mitochondrial complex I assembly/MCIA complex that comprises at least the core subunits TMEM126B, NDUFAF1, ECSIT and ACAD9 and complement subunits such as COA1 and TMEM186. Interacts with NDUFAF1. Interacts with ACAD9. Interacts with TRIM59. Interacts with TMEM70 and TMEM242. Interacts (when ubiquitinated) with NF-kappa-B subunits RELA and NFKB1. Interacts with RIGI, IFIT1 and MAVS; these interactions promote RLR-mediated type I IFN induction. Interacts with SQSTM1; this interaction inhibits TLR4 signaling via functional regulation of the TRAF6-ECSIT complex. Interacts with cereblon/CRBN; this interaction inhibits the ubiquitination of ECSIT. In terms of processing, ubiquitinated on Lys-372; leading to translocation in the nucleus together with RELA and NFKB1 and expression of NF-kappa-B-dependent genes.

It localises to the cytoplasm. It is found in the nucleus. Its subcellular location is the mitochondrion. In terms of biological role, adapter protein that plays a role in different signaling pathways including TLRs and IL-1 pathways or innate antiviral induction signaling. Plays a role in the activation of NF-kappa-B by forming a signal complex with TRAF6 and TAK1/MAP3K7 to activate TAK1/MAP3K7 leading to activation of IKKs. Once ubiquitinated, interacts with the dissociated RELA and NFKB1 proteins and translocates to the nucleus where it induces NF-kappa-B-dependent gene expression. Plays a role in innate antiviral immune response by bridging the pattern recognition receptors RIGI and MDA5/IFIT1 to the MAVS complex at the mitochondrion. Promotes proteolytic activation of MAP3K1. Involved in the BMP signaling pathway. Required for normal embryonic development. As part of the MCIA complex, involved in the assembly of the mitochondrial complex I. In Bos taurus (Bovine), this protein is Evolutionarily conserved signaling intermediate in Toll pathway, mitochondrial.